Reading from the N-terminus, the 249-residue chain is Small ribosomal subunit protein uS2 (249 aa).

The protein belongs to the universal ribosomal protein uS2 family.

The protein is Small ribosomal subunit protein uS2 of Polynucleobacter asymbioticus (strain DSM 18221 / CIP 109841 / QLW-P1DMWA-1) (Polynucleobacter necessarius subsp. asymbioticus).